The following is a 309-amino-acid chain: NAD kinase (309 aa).

The Proton acceptor role is filled by D89. NAD(+)-binding positions include 89 to 90 (DG), 163 to 164 (NE), H174, R191, D193, and 204 to 209 (TAYSLS).

The protein belongs to the NAD kinase family. Requires a divalent metal cation as cofactor.

It localises to the cytoplasm. The enzyme catalyses NAD(+) + ATP = ADP + NADP(+) + H(+). Its function is as follows. Involved in the regulation of the intracellular balance of NAD and NADP, and is a key enzyme in the biosynthesis of NADP. Catalyzes specifically the phosphorylation on 2'-hydroxyl of the adenosine moiety of NAD to yield NADP. The sequence is that of NAD kinase from Shewanella piezotolerans (strain WP3 / JCM 13877).